Reading from the N-terminus, the 389-residue chain is S-adenosylmethionine synthase (389 aa).

His-17 serves as a coordination point for ATP. Asp-19 lines the Mg(2+) pocket. Glu-45 lines the K(+) pocket. L-methionine-binding residues include Glu-58 and Gln-101. Residues 101–111 (QSPDIAQGVTE) are flexible loop. ATP-binding positions include 168-170 (DSK), 234-235 (RF), Asp-243, 249-250 (RK), Ala-266, and Lys-270. L-methionine is bound at residue Asp-243. Lys-274 provides a ligand contact to L-methionine.

It belongs to the AdoMet synthase family. In terms of assembly, homotetramer; dimer of dimers. The cofactor is Mg(2+). It depends on K(+) as a cofactor.

It localises to the cytoplasm. It catalyses the reaction L-methionine + ATP + H2O = S-adenosyl-L-methionine + phosphate + diphosphate. It participates in amino-acid biosynthesis; S-adenosyl-L-methionine biosynthesis; S-adenosyl-L-methionine from L-methionine: step 1/1. In terms of biological role, catalyzes the formation of S-adenosylmethionine (AdoMet) from methionine and ATP. The overall synthetic reaction is composed of two sequential steps, AdoMet formation and the subsequent tripolyphosphate hydrolysis which occurs prior to release of AdoMet from the enzyme. The protein is S-adenosylmethionine synthase of Geotalea uraniireducens (strain Rf4) (Geobacter uraniireducens).